Reading from the N-terminus, the 142-residue chain is Ribosomal RNA large subunit methyltransferase H (142 aa).

S-adenosyl-L-methionine contacts are provided by leucine 55 and glycine 87.

The protein belongs to the RNA methyltransferase RlmH family. Homodimer.

Its subcellular location is the cytoplasm. The enzyme catalyses pseudouridine(1915) in 23S rRNA + S-adenosyl-L-methionine = N(3)-methylpseudouridine(1915) in 23S rRNA + S-adenosyl-L-homocysteine + H(+). Specifically methylates the pseudouridine at position 1915 (m3Psi1915) in 23S rRNA. In Sphingopyxis alaskensis (strain DSM 13593 / LMG 18877 / RB2256) (Sphingomonas alaskensis), this protein is Ribosomal RNA large subunit methyltransferase H.